A 456-amino-acid chain; its full sequence is UDP-N-acetylmuramoylalanine--D-glutamate ligase (456 aa).

Position 113–119 (113–119 (GTNGKTT)) interacts with ATP.

This sequence belongs to the MurCDEF family.

The protein resides in the cytoplasm. It carries out the reaction UDP-N-acetyl-alpha-D-muramoyl-L-alanine + D-glutamate + ATP = UDP-N-acetyl-alpha-D-muramoyl-L-alanyl-D-glutamate + ADP + phosphate + H(+). The protein operates within cell wall biogenesis; peptidoglycan biosynthesis. Its function is as follows. Cell wall formation. Catalyzes the addition of glutamate to the nucleotide precursor UDP-N-acetylmuramoyl-L-alanine (UMA). This Rippkaea orientalis (strain PCC 8801 / RF-1) (Cyanothece sp. (strain PCC 8801)) protein is UDP-N-acetylmuramoylalanine--D-glutamate ligase.